Reading from the N-terminus, the 198-residue chain is tRNA (pseudouridine(54)-N(1))-methyltransferase (198 aa).

An S-adenosyl-L-methionine-binding site is contributed by Leu128.

The protein belongs to the methyltransferase superfamily. TrmY family. In terms of assembly, homodimer.

Its subcellular location is the cytoplasm. The catalysed reaction is pseudouridine(54) in tRNA + S-adenosyl-L-methionine = N(1)-methylpseudouridine(54) in tRNA + S-adenosyl-L-homocysteine + H(+). Functionally, specifically catalyzes the N1-methylation of pseudouridine at position 54 (Psi54) in tRNAs. The sequence is that of tRNA (pseudouridine(54)-N(1))-methyltransferase from Haloferax volcanii (strain ATCC 29605 / DSM 3757 / JCM 8879 / NBRC 14742 / NCIMB 2012 / VKM B-1768 / DS2) (Halobacterium volcanii).